Here is a 529-residue protein sequence, read N- to C-terminus: Probable serine/threonine protein phosphatase 2A regulatory subunit B''epsilon (529 aa).

A disordered region spans residues 60 to 110; that stretch reads KSGTPTNKSKNLPSVFLSSSTPPLSPRSSSGSPRFSRQRTSPPSLHSPLRS. Residues 71–109 are compositionally biased toward low complexity; it reads LPSVFLSSSTPPLSPRSSSGSPRFSRQRTSPPSLHSPLR. One can recognise an EF-hand domain in the interval 381-416; it reads SSEPSLEYWFKCVDLDGNGVITSNEMQFFFEEQLHR. Ca(2+)-binding residues include D394, D396, N398, and E405. Positions 507–529 are disordered; the sequence is EEDVDEVSNGSADVWDEPLEPPF. The segment covering 520-529 has biased composition (acidic residues); the sequence is VWDEPLEPPF.

PP2A consists of a common heterodimeric core enzyme, composed of a 36 kDa catalytic subunit (subunit C) and a 65 kDa constant regulatory subunit (PR65 or subunit A), that associates with a variety of regulatory subunits. Proteins that associate with the core dimer include three families of regulatory subunits B (the R2/B/PR55/B55, R3/B''/PR72/PR130/PR59 and R5/B'/B56 families) and cell signaling molecules.

Functionally, probable regulatory subunit of type 2A protein phosphatase. In Arabidopsis thaliana (Mouse-ear cress), this protein is Probable serine/threonine protein phosphatase 2A regulatory subunit B''epsilon (B''EPSILON).